The following is a 422-amino-acid chain: Metallocarboxypeptidase A-like protein TRV_02598 (422 aa).

The signal sequence occupies residues 1–16 (MQSLLLLATLLGSALG). Residues 17 to 119 (GAIPSQSANY…ELLTLDGGAN (103 aa)) constitute a propeptide, activation peptide. Residues 125-421 (SYHKYEDHLK…AGVKAMFSKL (297 aa)) form the Peptidase M14 domain. The Zn(2+) site is built by H185 and E188. Substrate is bound by residues 185-188 (HARE), R240, and 256-257 (NR). C250 and C273 form a disulfide bridge. Residue H311 participates in Zn(2+) binding. Residue 312-313 (SY) coordinates substrate. E387 serves as the catalytic Proton donor/acceptor.

The protein belongs to the peptidase M14 family. Zn(2+) serves as cofactor.

The protein localises to the secreted. Extracellular metalloprotease that contributes to pathogenicity. The sequence is that of Metallocarboxypeptidase A-like protein TRV_02598 from Trichophyton verrucosum (strain HKI 0517).